The sequence spans 64 residues: Ferredoxin-like protein in nif region (64 aa).

The 29-residue stretch at 2 to 30 folds into the 4Fe-4S ferredoxin-type domain; sequence AFKIIASQCTQCGACEFECPSNAIELKGE. The [4Fe-4S] cluster site is built by Cys10, Cys13, Cys16, Cys20, Cys39, Cys42, Cys51, and Cys55.

It depends on [4Fe-4S] cluster as a cofactor.

In Sinorhizobium fredii (strain NBRC 101917 / NGR234), this protein is Ferredoxin-like protein in nif region (fdxN).